Consider the following 296-residue polypeptide: Mycothiol acetyltransferase (296 aa).

2 N-acetyltransferase domains span residues 1–148 and 151–296; these read MTEW…IRVD and VTVR…YGRA. Residue E34 participates in 1D-myo-inositol 2-(L-cysteinylamino)-2-deoxy-alpha-D-glucopyranoside binding. Acetyl-CoA is bound by residues 79–81 and 87–92; these read LVV and RRGIGS. Positions 178, 219, and 229 each coordinate 1D-myo-inositol 2-(L-cysteinylamino)-2-deoxy-alpha-D-glucopyranoside. Acetyl-CoA contacts are provided by residues 233–235 and 240–246; these read VGV and QGRGLGH. 1D-myo-inositol 2-(L-cysteinylamino)-2-deoxy-alpha-D-glucopyranoside is bound at residue Y267. Residue 272–277 participates in acetyl-CoA binding; the sequence is NQAALR.

The protein belongs to the acetyltransferase family. MshD subfamily. As to quaternary structure, monomer.

It catalyses the reaction 1D-myo-inositol 2-(L-cysteinylamino)-2-deoxy-alpha-D-glucopyranoside + acetyl-CoA = mycothiol + CoA + H(+). Catalyzes the transfer of acetyl from acetyl-CoA to desacetylmycothiol (Cys-GlcN-Ins) to form mycothiol. This chain is Mycothiol acetyltransferase, found in Mycobacteroides abscessus (strain ATCC 19977 / DSM 44196 / CCUG 20993 / CIP 104536 / JCM 13569 / NCTC 13031 / TMC 1543 / L948) (Mycobacterium abscessus).